Here is a 490-residue protein sequence, read N- to C-terminus: Transmembrane protease serine 2 (490 aa).

At 1–83 (MALNSGSPPG…ALCTSKSKKS (83 aa)) the chain is on the cytoplasmic side. A helical; Signal-anchor for type II membrane protein membrane pass occupies residues 84–104 (LCLALALGTVLTGAAVAAVLL). The Extracellular segment spans residues 105 to 490 (WRFWDSNCST…WIYQQMRANS (386 aa)). Asn-111 carries N-linked (GlcNAc...) asparagine glycosylation. Residues 111–149 (NCSTSEMECGSSGTCISSSLWCDGVAHCPNGEDENRCVR) enclose the LDL-receptor class A domain. Intrachain disulfides connect Cys-112–Cys-125, Cys-119–Cys-138, Cys-132–Cys-147, Cys-171–Cys-230, Cys-184–Cys-240, Cys-243–Cys-363, Cys-279–Cys-295, Cys-408–Cys-424, and Cys-435–Cys-463. The Ca(2+) site is built by Asp-133, Val-135, Asp-143, and Glu-144. In terms of domain architecture, SRCR spans 150–242 (LYGQSFILQV…RMVVSLRCIE (93 aa)). Asn-212 is a glycosylation site (N-linked (GlcNAc...) asparagine). One can recognise a Peptidase S1 domain in the interval 254–487 (IVGGLNASPG…FTDWIYQQMR (234 aa)). Residues His-294 and Asp-343 each act as charge relay system in the active site. Ser-439 serves as the catalytic Charge relay system. Asn-474 is a glycosylation site (N-linked (GlcNAc...) asparagine).

Belongs to the peptidase S1 family. The catalytically active form interacts with ACE2. In terms of processing, proteolytically processed; by an autocatalytic mechanism. Autocleavage induces active conformation. Larynx, trachea and bronchi, lung, prostate and kidney.

The protein localises to the cell membrane. The protein resides in the secreted. The enzyme catalyses The enzyme cleaves angiotensin-converting enzyme 2 (EC 3.4.17.23) and cleaves influenzea A and B virus and coronavirus spike glycoproteins at arginine residues.. Functionally, plasma membrane-anchored serine protease that cleaves at arginine residues. Participates in proteolytic cascades of relevance for the normal physiologic function of the prostate. Androgen-induced TMPRSS2 activates several substrates that include pro-hepatocyte growth factor/HGF, the protease activated receptor-2/F2RL1 or matriptase/ST14 leading to extracellular matrix disruption. In addition, activates trigeminal neurons and contribute to both spontaneous pain and mechanical allodynia. (Microbial infection) Essential for spread and pathogenesis of influenza A virus (strains H1N1, H3N2 and H7N9) and is involved in proteolytic cleavage and activation of hemagglutinin (HA) protein which is essential for viral infectivity. This is Transmembrane protease serine 2 (Tmprss2) from Mus musculus (Mouse).